Reading from the N-terminus, the 319-residue chain is Transcription factor jun-1 (319 aa).

Disordered stretches follow at residues 1–52 and 216–264; these read MEED…EKES and NGVN…CRQK. Positions 8–19 are enriched in low complexity; sequence PPSSSTSSESPE. Residues 28–38 show a composition bias toward basic residues; the sequence is PTRRRKNSKKD. The interval 244–285 is basic motif; it reads KKKLERKRARNRQAATKCRQKKMDRIKELEEQVLHEKHRGQR. Residues 244-307 form the bZIP domain; the sequence is KKKLERKRAR…EHFRRTVEHH (64 aa). Positions 286-293 are leucine-zipper; it reads LDAELLEL.

It belongs to the bZIP family. Jun subfamily. Heterodimer; with fos-1. As to expression, isoform a, isoform b, isoform c and isoform d are expressed in the spermatheca.

The protein localises to the nucleus. Its function is as follows. Transcription factor that recognizes and binds to the AP-1 non-canonical enhancer heptamer motif 5'-TTAGTCA-3'. Required for ovulation. Controls plc-1 expression in the spermatheca to regulate spermathecal valve dilation. The chain is Transcription factor jun-1 from Caenorhabditis elegans.